The primary structure comprises 572 residues: Urease subunit alpha (572 aa).

The Urease domain maps to 134–572; it reads GGIDSHIHFI…LPLAQRYFLF (439 aa). 3 residues coordinate Ni(2+): histidine 139, histidine 141, and lysine 222. Lysine 222 bears the N6-carboxylysine mark. Position 224 (histidine 224) interacts with substrate. Positions 251 and 277 each coordinate Ni(2+). The Proton donor role is filled by histidine 325. Aspartate 365 is a binding site for Ni(2+).

It belongs to the metallo-dependent hydrolases superfamily. Urease alpha subunit family. Heterotrimer of UreA (gamma), UreB (beta) and UreC (alpha) subunits. Three heterotrimers associate to form the active enzyme. Ni cation is required as a cofactor. In terms of processing, carboxylation allows a single lysine to coordinate two nickel ions.

It is found in the cytoplasm. It catalyses the reaction urea + 2 H2O + H(+) = hydrogencarbonate + 2 NH4(+). It participates in nitrogen metabolism; urea degradation; CO(2) and NH(3) from urea (urease route): step 1/1. The polypeptide is Urease subunit alpha (Paracidovorax citrulli (strain AAC00-1) (Acidovorax citrulli)).